Consider the following 290-residue polypeptide: Concanavalin-A (290 aa).

Positions 1 to 29 are cleaved as a signal peptide; the sequence is MAISKKSSLFLPIFTFITMFLMVVNKVSS. Positions 119 and 139 each coordinate a carbohydrate. Asp-119 provides a ligand contact to Ca(2+). Positions 149-163 are excised as a propeptide; the sequence is VIRNSTTIDFNAAYN. Asn-152 carries an N-linked (GlcNAc...) asparagine glycan. Mn(2+) contacts are provided by Glu-171 and Asp-173. 4 residues coordinate Ca(2+): Asp-173, Tyr-175, Asn-177, and Asp-182. Residues Asp-182 and His-187 each coordinate Mn(2+). A carbohydrate is bound at residue 262–263; the sequence is LY. The propeptide occupies 282-290; that stretch reads EIPDIATVV.

The protein belongs to the leguminous lectin family. As to quaternary structure, homotetramer. The mature chain consists of residues 164-281 followed by 30-148. To form a mature chain the precursor undergoes further post-translational modification after removal of the signal sequence; cleavage after Asn at positions Asn-148, Asn-163, and Asn-281 is followed by transposition and ligation (By formation of a new peptide bond) of residues 164-281 and 30-148.

Glucose/D-mannose/rhamnose specific lectin. Has hemagglutinating activity towards rabbit erythrocytes. Has mitogenic activity towards murine splenocytes that is inhibited by glucose. Inhibits HIV-1 reverse transcriptase with an IC(50) of 35 uM. Has a potent antiproliferative activity against L1210 leukemia cells in vitro that is not inhibited by glucose. Inhibits translation in cell-free rabbit reticulocyte system with an IC(50) of 2.08 uM. Lacks anti-fungal activity against M.arachidicola, B.cenera and F.oxysporum. The protein is Concanavalin-A of Canavalia gladiata (Sword bean).